The primary structure comprises 117 residues: Hainantoxin-XV-2 (117 aa).

Positions 1–20 (MKLCAVIIASLLVCVAVASS) are cleaved as a signal peptide. The interval 20 to 55 (SSDNQKEFAQEKEMTREETQSLGEHEKDDEVTGSEE) is disordered. A propeptide spanning residues 21–56 (SDNQKEFAQEKEMTREETQSLGEHEKDDEVTGSEER) is cleaved from the precursor. A compositionally biased stretch (basic and acidic residues) spans 23 to 55 (NQKEFAQEKEMTREETQSLGEHEKDDEVTGSEE). Intrachain disulfides connect C58-C72, C65-C78, C69-C115, and C71-C91.

This sequence belongs to the neurotoxin 03 (Tx2) family. 02 subfamily. HNTX-XV sub-subfamily. In terms of tissue distribution, expressed by the venom gland.

The protein resides in the secreted. Its function is as follows. Putative ion channel inhibitor. This chain is Hainantoxin-XV-2, found in Cyriopagopus hainanus (Chinese bird spider).